A 278-amino-acid polypeptide reads, in one-letter code: Nucleotide-binding protein Tmel_1373 (278 aa).

G10–S17 contacts ATP. D58 to S61 contributes to the GTP binding site.

Belongs to the RapZ-like family.

Displays ATPase and GTPase activities. The sequence is that of Nucleotide-binding protein Tmel_1373 from Thermosipho melanesiensis (strain DSM 12029 / CIP 104789 / BI429).